The sequence spans 76 residues: Small ribosomal subunit protein bS18 (76 aa).

It belongs to the bacterial ribosomal protein bS18 family. As to quaternary structure, part of the 30S ribosomal subunit. Forms a tight heterodimer with protein bS6.

Functionally, binds as a heterodimer with protein bS6 to the central domain of the 16S rRNA, where it helps stabilize the platform of the 30S subunit. The chain is Small ribosomal subunit protein bS18 from Pseudomonas entomophila (strain L48).